The primary structure comprises 381 residues: Sensor histidine kinase FlgS (381 aa).

The 205-residue stretch at 177–381 (HLAHEIRNPV…TFEIKILNAS (205 aa)) folds into the Histidine kinase domain. H180 is subject to Phosphohistidine; by autocatalysis.

Interacts (via its C-terminal kinase domain) with FlhA (via N-terminus). Post-translationally, autophosphorylated.

It catalyses the reaction ATP + protein L-histidine = ADP + protein N-phospho-L-histidine.. Its function is as follows. Member of the two-component regulatory system FlgR/FlgS that induces the transcriptional induction of the genes needed in motility and flagellar biogenesis. Also plays an essential role in bacterial survival at pH 2.5 independently of FlgR. Functions as a sensor protein kinase which is autophosphorylated at a histidine residue and transfers its phosphate group to the conserved aspartic acid residue in the regulatory domain of FlgR. In turn, FlgR functions as a transcriptional regulator initiating transcription from RpoN-dependent promoters. The protein is Sensor histidine kinase FlgS (flgS) of Helicobacter pylori (strain ATCC 700392 / 26695) (Campylobacter pylori).